Consider the following 506-residue polypeptide: Maturase K (506 aa).

It belongs to the intron maturase 2 family. MatK subfamily.

The protein resides in the plastid. Its subcellular location is the chloroplast. In terms of biological role, usually encoded in the trnK tRNA gene intron. Probably assists in splicing its own and other chloroplast group II introns. The sequence is that of Maturase K from Pisum sativum (Garden pea).